Consider the following 63-residue polypeptide: Ct-IT2 (63 aa).

The 63-residue stretch at 1 to 63 folds into the LCN-type CS-alpha/beta domain; sequence KDGYPMDSKG…VWDKATNKCG (63 aa). 4 disulfides stabilise this stretch: cysteine 11–cysteine 62, cysteine 15–cysteine 36, cysteine 22–cysteine 43, and cysteine 26–cysteine 45. Position 63 is a glycine amide (glycine 63).

Expressed by the venom gland.

It is found in the secreted. Its function is as follows. Beta toxins bind voltage-independently at site-4 of sodium channels (Nav) and shift the voltage of activation toward more negative potentials thereby affecting sodium channel activation and promoting spontaneous and repetitive firing. Is highly active on insects, since it provokes paralysis and death when injected into crickets. The sequence is that of Ct-IT2 from Centruroides tecomanus (Scorpion).